A 472-amino-acid chain; its full sequence is Ras-GEF domain-containing family member 1B (472 aa).

One can recognise an N-terminal Ras-GEF domain in the interval 34 to 164 (HDNNLLSGSL…MMQCLIRKLA (131 aa)). One can recognise a Ras-GEF domain in the interval 204–452 (DPYTLAQQLT…YLASYESEGP (249 aa)).

Interacts with CCDC124 during cytokinesis. Interacts with Ras family proteins.

The protein resides in the early endosome. It is found in the late endosome. The protein localises to the midbody. Guanine nucleotide exchange factor (GEF) with specificity for RAP2A, it doesn't seems to activate other Ras family proteins (in vitro). The protein is Ras-GEF domain-containing family member 1B (RASGEF1B) of Pongo abelii (Sumatran orangutan).